A 339-amino-acid polypeptide reads, in one-letter code: DNA-directed RNA polymerase subunit alpha (339 aa).

Positions 1–235 (MTIQKNWQEL…DQLNVFVNFE (235 aa)) are alpha N-terminal domain (alpha-NTD). The tract at residues 251-339 (FNPAFLKKVD…ELAKRFEDHY (89 aa)) is alpha C-terminal domain (alpha-CTD).

The protein belongs to the RNA polymerase alpha chain family. In terms of assembly, homodimer. The RNAP catalytic core consists of 2 alpha, 1 beta, 1 beta' and 1 omega subunit. When a sigma factor is associated with the core the holoenzyme is formed, which can initiate transcription.

The enzyme catalyses RNA(n) + a ribonucleoside 5'-triphosphate = RNA(n+1) + diphosphate. DNA-dependent RNA polymerase catalyzes the transcription of DNA into RNA using the four ribonucleoside triphosphates as substrates. This Afipia carboxidovorans (strain ATCC 49405 / DSM 1227 / KCTC 32145 / OM5) (Oligotropha carboxidovorans) protein is DNA-directed RNA polymerase subunit alpha.